Consider the following 187-residue polypeptide: Protein dj-1beta (187 aa).

Residue Cys-45 is modified to Cysteine sulfinic acid (-SO2H). The Nucleophile role is filled by Cys-104. Cys-104 is subject to Cysteine sulfinic acid (-SO2H); alternate.

In terms of processing, oxidation of Cys-45 and Cys-104 in response to oxidative stress. Levels of oxidation increase with age. In terms of tissue distribution, expressed in the head and testis (at protein level). Ubiquitously expressed at constant levels.

It is found in the mitochondrion. Its subcellular location is the cytoplasm. It localises to the nucleus. Its function is as follows. Plays an important role in cell protection against oxidative stress and cell death by acting as a oxidative stress sensor. Does not play a role in methylglyoxal detoxification. Plays a role in mitochondrial function together with Pink1. In motor neurons regulates structural synaptic plasticity of locomotor behavior as part of the PTEN-phosphatidylinositol 3-kinase pathway in response to oxygen species (ROS) levels. This is Protein dj-1beta from Drosophila melanogaster (Fruit fly).